A 600-amino-acid chain; its full sequence is Glutamine--fructose-6-phosphate aminotransferase [isomerizing] (600 aa).

The active-site Nucleophile; for GATase activity is C2. The Glutamine amidotransferase type-2 domain maps to 2 to 217; sequence CGIVGYIGQL…DKEMVIVTDK (216 aa). SIS domains are found at residues 283-422 and 452-590; these read ISNA…SRGK and IARE…VDKP. K595 acts as the For Fru-6P isomerization activity in catalysis.

As to quaternary structure, homodimer.

It localises to the cytoplasm. It catalyses the reaction D-fructose 6-phosphate + L-glutamine = D-glucosamine 6-phosphate + L-glutamate. In terms of biological role, catalyzes the first step in hexosamine metabolism, converting fructose-6P into glucosamine-6P using glutamine as a nitrogen source. The chain is Glutamine--fructose-6-phosphate aminotransferase [isomerizing] from Bacillus licheniformis (strain ATCC 14580 / DSM 13 / JCM 2505 / CCUG 7422 / NBRC 12200 / NCIMB 9375 / NCTC 10341 / NRRL NRS-1264 / Gibson 46).